The sequence spans 325 residues: Lipoyl synthase (325 aa).

[4Fe-4S] cluster contacts are provided by Cys68, Cys73, Cys79, Cys94, Cys98, Cys101, and Ser308. The region spanning 80–297 (FGGGTATFMI…ARVANELGFT (218 aa)) is the Radical SAM core domain.

The protein belongs to the radical SAM superfamily. Lipoyl synthase family. [4Fe-4S] cluster is required as a cofactor.

It localises to the cytoplasm. The catalysed reaction is [[Fe-S] cluster scaffold protein carrying a second [4Fe-4S](2+) cluster] + N(6)-octanoyl-L-lysyl-[protein] + 2 oxidized [2Fe-2S]-[ferredoxin] + 2 S-adenosyl-L-methionine + 4 H(+) = [[Fe-S] cluster scaffold protein] + N(6)-[(R)-dihydrolipoyl]-L-lysyl-[protein] + 4 Fe(3+) + 2 hydrogen sulfide + 2 5'-deoxyadenosine + 2 L-methionine + 2 reduced [2Fe-2S]-[ferredoxin]. The protein operates within protein modification; protein lipoylation via endogenous pathway; protein N(6)-(lipoyl)lysine from octanoyl-[acyl-carrier-protein]: step 2/2. Functionally, catalyzes the radical-mediated insertion of two sulfur atoms into the C-6 and C-8 positions of the octanoyl moiety bound to the lipoyl domains of lipoate-dependent enzymes, thereby converting the octanoylated domains into lipoylated derivatives. The sequence is that of Lipoyl synthase from Alcanivorax borkumensis (strain ATCC 700651 / DSM 11573 / NCIMB 13689 / SK2).